The primary structure comprises 546 residues: Carboxypeptidase Y homolog A (546 aa).

The N-terminal stretch at 1 to 17 (MKLLASTVLVGAAAASI) is a signal peptide. Residues 18–132 (TPQQQVLQNP…KLEQYNLRAK (115 aa)) constitute a propeptide that is removed on maturation. Cystine bridges form between Cys-186–Cys-426, Cys-320–Cys-334, Cys-344–Cys-367, Cys-351–Cys-360, and Cys-389–Cys-396. A glycan (N-linked (GlcNAc...) asparagine) is linked at Asn-217. Ser-273 is a catalytic residue. Asp-465 is a catalytic residue. Asn-512 carries N-linked (GlcNAc...) asparagine glycosylation. His-523 is an active-site residue.

Belongs to the peptidase S10 family.

It localises to the vacuole. The enzyme catalyses Release of a C-terminal amino acid with broad specificity.. Functionally, vacuolar carboxypeptidase involved in degradation of small peptides. Digests preferentially peptides containing an aliphatic or hydrophobic residue in P1' position, as well as methionine, leucine or phenylalanine in P1 position of ester substrate. In Botryotinia fuckeliana (strain B05.10) (Noble rot fungus), this protein is Carboxypeptidase Y homolog A (CPYA).